Reading from the N-terminus, the 30-residue chain is Putative UPF0377 protein YNR075C-A (30 aa).

It belongs to the UPF0377 family.

The protein is Putative UPF0377 protein YNR075C-A of Saccharomyces cerevisiae (strain ATCC 204508 / S288c) (Baker's yeast).